We begin with the raw amino-acid sequence, 201 residues long: LexA repressor (201 aa).

Residues 29-49 constitute a DNA-binding region (H-T-H motif); that stretch reads VREICKAVGLSSTSSVHFHLK. Catalysis depends on for autocatalytic cleavage activity residues serine 125 and lysine 162.

The protein belongs to the peptidase S24 family. Homodimer.

The catalysed reaction is Hydrolysis of Ala-|-Gly bond in repressor LexA.. In terms of biological role, represses a number of genes involved in the response to DNA damage (SOS response), including recA and lexA. In the presence of single-stranded DNA, RecA interacts with LexA causing an autocatalytic cleavage which disrupts the DNA-binding part of LexA, leading to derepression of the SOS regulon and eventually DNA repair. In Clostridium botulinum (strain ATCC 19397 / Type A), this protein is LexA repressor.